The sequence spans 447 residues: Methylenetetrahydrofolate--tRNA-(uracil-5-)-methyltransferase TrmFO (447 aa).

8–13 contacts FAD; the sequence is GGGLAG. Positions 398–421 are disordered; it reads NWGLVPAPPKRENGRRLGRQERRR. Residues 406-417 are compositionally biased toward basic and acidic residues; that stretch reads PKRENGRRLGRQ.

Belongs to the MnmG family. TrmFO subfamily. FAD is required as a cofactor.

The protein resides in the cytoplasm. The catalysed reaction is uridine(54) in tRNA + (6R)-5,10-methylene-5,6,7,8-tetrahydrofolate + NADH + H(+) = 5-methyluridine(54) in tRNA + (6S)-5,6,7,8-tetrahydrofolate + NAD(+). The enzyme catalyses uridine(54) in tRNA + (6R)-5,10-methylene-5,6,7,8-tetrahydrofolate + NADPH + H(+) = 5-methyluridine(54) in tRNA + (6S)-5,6,7,8-tetrahydrofolate + NADP(+). Catalyzes the folate-dependent formation of 5-methyl-uridine at position 54 (M-5-U54) in all tRNAs. The polypeptide is Methylenetetrahydrofolate--tRNA-(uracil-5-)-methyltransferase TrmFO (Rubrobacter xylanophilus (strain DSM 9941 / JCM 11954 / NBRC 16129 / PRD-1)).